The sequence spans 992 residues: UPF0182 protein RHA1_ro06389 (992 aa).

A run of 7 helical transmembrane segments spans residues 18–38 (VLLV…RLIS), 63–83 (LLLF…ALLL), 114–134 (LFGL…AQSS), 174–194 (WLFV…YIFG), 211–231 (VQLA…YWFD), 260–280 (KLIL…AIFL), and 288–308 (MATA…PLVV). Residues 904–948 (TGSVATAPSAEEGTPPETGTTPPVDQGAAPAPTAPATPPSGTDVS) form a disordered region. A compositionally biased stretch (low complexity) spans 908–934 (ATAPSAEEGTPPETGTTPPVDQGAAPA).

The protein belongs to the UPF0182 family.

It localises to the cell membrane. This is UPF0182 protein RHA1_ro06389 from Rhodococcus jostii (strain RHA1).